The following is a 351-amino-acid chain: Histidinol-phosphate aminotransferase (351 aa).

The interval 1–26 is disordered; the sequence is MRFRAELEPLSPYNPPRASQEAAAER. Lys223 bears the N6-(pyridoxal phosphate)lysine mark.

The protein belongs to the class-II pyridoxal-phosphate-dependent aminotransferase family. Histidinol-phosphate aminotransferase subfamily. Homodimer. It depends on pyridoxal 5'-phosphate as a cofactor.

It catalyses the reaction L-histidinol phosphate + 2-oxoglutarate = 3-(imidazol-4-yl)-2-oxopropyl phosphate + L-glutamate. Its pathway is amino-acid biosynthesis; L-histidine biosynthesis; L-histidine from 5-phospho-alpha-D-ribose 1-diphosphate: step 7/9. In Rubrobacter xylanophilus (strain DSM 9941 / JCM 11954 / NBRC 16129 / PRD-1), this protein is Histidinol-phosphate aminotransferase.